Consider the following 313-residue polypeptide: MFASIWQTRAVGVLIGCLLDVVFGDPKRGHPVALFGRAAAKLEQITYRDGRVAGAVHVGLLVGAVGLLGAALQRLPGRCWPVAATATATWAALGGTSLARTGRQISDLLERDDVEAARRLLPSLCGRDPAQLGGPGLTRAALESVAENTADAQVVPLLWAASSGVPAVLGYRAINTLDSMIGYRSPRYLRFGWAAARLDDWANYVGARATAVLVVICAPVVGGSPRGAVRAWRRDAARHPSPNAGVVEAAFAGALDVRLGGPTRYHHELQIRPTLGDGRSPKVADLRRAVVLSRVVQAGAAVLAVMLVYRRRP.

5 consecutive transmembrane segments (helical) span residues 52–72, 79–99, 154–174, 204–224, and 289–309; these read VAGA…GAAL, CWPV…TSLA, VVPL…YRAI, YVGA…VGGS, and AVVL…MLVY.

This sequence belongs to the CobD/CbiB family.

Its subcellular location is the cell membrane. It functions in the pathway cofactor biosynthesis; adenosylcobalamin biosynthesis. Converts cobyric acid to cobinamide by the addition of aminopropanol on the F carboxylic group. This chain is Cobalamin biosynthesis protein CobD, found in Mycobacterium bovis (strain ATCC BAA-935 / AF2122/97).